Here is a 134-residue protein sequence, read N- to C-terminus: Protein NrdI (134 aa).

Belongs to the NrdI family.

Functionally, probably involved in ribonucleotide reductase function. The protein is Protein NrdI of Rhizobium etli (strain CIAT 652).